The chain runs to 184 residues: ATP synthase subunit b, chloroplastic (184 aa).

A helical transmembrane segment spans residues 27-49 (LATNLINLSVVLGVLIFFGKGVL).

Belongs to the ATPase B chain family. In terms of assembly, F-type ATPases have 2 components, F(1) - the catalytic core - and F(0) - the membrane proton channel. F(1) has five subunits: alpha(3), beta(3), gamma(1), delta(1), epsilon(1). F(0) has four main subunits: a(1), b(1), b'(1) and c(10-14). The alpha and beta chains form an alternating ring which encloses part of the gamma chain. F(1) is attached to F(0) by a central stalk formed by the gamma and epsilon chains, while a peripheral stalk is formed by the delta, b and b' chains.

The protein localises to the plastid. It localises to the chloroplast thylakoid membrane. In terms of biological role, f(1)F(0) ATP synthase produces ATP from ADP in the presence of a proton or sodium gradient. F-type ATPases consist of two structural domains, F(1) containing the extramembraneous catalytic core and F(0) containing the membrane proton channel, linked together by a central stalk and a peripheral stalk. During catalysis, ATP synthesis in the catalytic domain of F(1) is coupled via a rotary mechanism of the central stalk subunits to proton translocation. Functionally, component of the F(0) channel, it forms part of the peripheral stalk, linking F(1) to F(0). This is ATP synthase subunit b, chloroplastic from Nicotiana tabacum (Common tobacco).